Here is a 429-residue protein sequence, read N- to C-terminus: Ubiquinone hydroxylase UbiL (429 aa).

The segment at 1–22 (MSEPLLRGLAAGDPPSATGPVT) is disordered.

This sequence belongs to the UbiH/COQ6 family. Requires FAD as cofactor.

It catalyses the reaction a 2-(all-trans-polyprenyl)phenol + NADPH + O2 + H(+) = a 3-(all-trans-polyprenyl)benzene-1,2-diol + NADP(+) + H2O. It participates in cofactor biosynthesis; ubiquinone biosynthesis. Its function is as follows. Catalyzes the hydroxylation of two positions of the aromatic ring during ubiquinone biosynthesis. In Rhodospirillum rubrum (strain ATCC 11170 / ATH 1.1.1 / DSM 467 / LMG 4362 / NCIMB 8255 / S1), this protein is Ubiquinone hydroxylase UbiL.